The following is an 897-amino-acid chain: 3'-5' exonuclease DinG (897 aa).

One can recognise an Exonuclease domain in the interval 8 to 161; that stretch reads VVDLETTGNQ…DEDAATTAKL (154 aa). In terms of domain architecture, Helicase ATP-binding spans 241–496; it reads SKAVDQLGLT…KAIDQLEKQR (256 aa). 276–283 lines the ATP pocket; sequence ASLGSGKS. Positions 448-451 match the DEAH box motif; that stretch reads DEAH. One can recognise a Helicase C-terminal domain in the interval 703–893; that stretch reads NIDEYVASIV…QFGKLLRQIQ (191 aa).

It belongs to the helicase family. DinG subfamily. Type 2 sub-subfamily.

3'-5' exonuclease. The polypeptide is 3'-5' exonuclease DinG (Staphylococcus aureus (strain MSSA476)).